The sequence spans 457 residues: D-hydantoinase (457 aa).

2 residues coordinate Zn(2+): His57 and His59. A Phosphoserine modification is found at Ser69. Lys148 contacts Zn(2+). At Lys148 the chain carries N6-carboxylysine. Residue Tyr153 coordinates substrate. Positions 181 and 237 each coordinate Zn(2+). Thr286 contacts substrate. Asp313 is a binding site for Zn(2+). Substrate is bound at residue Asn335.

The protein belongs to the metallo-dependent hydrolases superfamily. Hydantoinase/dihydropyrimidinase family. As to quaternary structure, homodimer and homotetramer. The cofactor is Zn(2+). Post-translationally, carboxylation allows a single lysine to coordinate two zinc ions.

Catalyzes the stereospecific hydrolysis of the cyclic amide bond of D-hydantoin derivatives. This Ralstonia pickettii (Burkholderia pickettii) protein is D-hydantoinase (hyuA).